We begin with the raw amino-acid sequence, 275 residues long: Polyamine aminopropyltransferase (275 aa).

Residues 2-235 enclose the PABS domain; the sequence is ELWFTEKQTK…GLWTFTIGSK (234 aa). Glutamine 31 contacts S-methyl-5'-thioadenosine. The spermidine site is built by histidine 62 and aspartate 86. S-methyl-5'-thioadenosine contacts are provided by residues glutamate 106 and 137–138; that span reads DG. Aspartate 155 functions as the Proton acceptor in the catalytic mechanism. 155 to 158 is a spermidine binding site; it reads DSTE. An S-methyl-5'-thioadenosine-binding site is contributed by proline 162.

This sequence belongs to the spermidine/spermine synthase family. In terms of assembly, homodimer or homotetramer.

The protein localises to the cytoplasm. It carries out the reaction S-adenosyl 3-(methylsulfanyl)propylamine + putrescine = S-methyl-5'-thioadenosine + spermidine + H(+). The protein operates within amine and polyamine biosynthesis; spermidine biosynthesis; spermidine from putrescine: step 1/1. In terms of biological role, catalyzes the irreversible transfer of a propylamine group from the amino donor S-adenosylmethioninamine (decarboxy-AdoMet) to putrescine (1,4-diaminobutane) to yield spermidine. The protein is Polyamine aminopropyltransferase of Bacillus cytotoxicus (strain DSM 22905 / CIP 110041 / 391-98 / NVH 391-98).